Here is a 156-residue protein sequence, read N- to C-terminus: Small ribosomal subunit protein uS7 (156 aa).

It belongs to the universal ribosomal protein uS7 family. As to quaternary structure, part of the 30S ribosomal subunit. Contacts proteins S9 and S11.

One of the primary rRNA binding proteins, it binds directly to 16S rRNA where it nucleates assembly of the head domain of the 30S subunit. Is located at the subunit interface close to the decoding center, probably blocks exit of the E-site tRNA. This is Small ribosomal subunit protein uS7 from Sorangium cellulosum (strain So ce56) (Polyangium cellulosum (strain So ce56)).